Consider the following 256-residue polypeptide: Trypsin alpha (256 aa).

An N-terminal signal peptide occupies residues 1–22; the sequence is MLKIVILLSAVVCALGGTVPEG. The propeptide at 23 to 30 is activation peptide; sequence LLPQLDGR. The Peptidase S1 domain maps to 31–254; it reads IVGGSATTIS…LRSWVISTAN (224 aa). Cys56 and Cys72 are joined by a disulfide. Catalysis depends on charge relay system residues His71 and Asp116. Intrachain disulfides connect Cys180-Cys197 and Cys206-Cys230. Catalysis depends on Ser210, which acts as the Charge relay system.

It belongs to the peptidase S1 family.

It is found in the secreted. Its subcellular location is the extracellular space. It carries out the reaction Preferential cleavage: Arg-|-Xaa, Lys-|-Xaa.. This is Trypsin alpha (alphaTry) from Drosophila erecta (Fruit fly).